Reading from the N-terminus, the 141-residue chain is Hemoglobin subunit alpha-D (141 aa).

The Globin domain occupies 1–141 (MLTAEDKKLI…VAAVLAEKYR (141 aa)). Heme b is bound by residues H58 and H87.

It belongs to the globin family. Heterotetramer of two alpha-D chains and two beta chains. Red blood cells.

Functionally, involved in oxygen transport from the lung to the various peripheral tissues. In Accipiter gentilis (Northern goshawk), this protein is Hemoglobin subunit alpha-D (HBAD).